The sequence spans 398 residues: MQKDASSSGFLPSFQHFATQAIHVGPEPEQWSSRAVVLPISLATTFKQDSPGQSSGFVYSRSGNPTRNCLEKAVAALDGAKHCLTFARGLAATTTITHLLKAGDEVICMDEVYGGTNRYFRRVASEFGLKISFVDCSKTKLLEAAITPQTKLVWIETPTNPTLKLADIKACAQIVHKHKDIILVVDNTFMSAYFQRPLALGADICMCSATKYMNGHSDVVMGLVSVTSDDLNERLRFLQNSLGAVPSPFDCYLCCRGLKTLQIRMEKHFRNGMAVARFLESNPRVEKVIYPGLPSHPQHELAKRQCTGCPGMVSFYIKGTLQHAQVFLKNIKLFALAESLGGYESLAELPAIMTHASVPEKDRATLGISDTLIRLSVGLEDEKDLLEDLGQALKAAHP.

Ser-50 carries the post-translational modification Phosphoserine. Residues Arg-61, Tyr-113, and Arg-118 each coordinate substrate. Lys-211 is subject to N6-(pyridoxal phosphate)lysine. Glu-338 is a binding site for substrate.

This sequence belongs to the trans-sulfuration enzymes family. As to quaternary structure, homotetramer. Interacts with CALM in a calcium-dependent manner. The cofactor is pyridoxal 5'-phosphate.

It is found in the cytoplasm. The catalysed reaction is L,L-cystathionine + H2O = 2-oxobutanoate + L-cysteine + NH4(+). It catalyses the reaction L-homoserine = 2-oxobutanoate + NH4(+). It carries out the reaction L-selenocystathionine + H2O = L-selenocysteine + 2-oxobutanoate + NH4(+). The enzyme catalyses L-cysteine + H2O = hydrogen sulfide + pyruvate + NH4(+) + H(+). The catalysed reaction is L-homocysteine + H2O = 2-oxobutanoate + hydrogen sulfide + NH4(+) + H(+). The protein operates within amino-acid biosynthesis; L-cysteine biosynthesis; L-cysteine from L-homocysteine and L-serine: step 2/2. Catalyzes the last step in the trans-sulfuration pathway from L-methionine to L-cysteine in a pyridoxal-5'-phosphate (PLP)-dependent manner, which consists on cleaving the L,L-cystathionine molecule into L-cysteine, ammonia and 2-oxobutanoate. Part of the L-cysteine derived from the trans-sulfuration pathway is utilized for biosynthesis of the ubiquitous antioxidant glutathione. Besides its role in the conversion of L-cystathionine into L-cysteine, it utilizes L-cysteine and L-homocysteine as substrates (at much lower rates than L,L-cystathionine) to produce hydrogen sulfide (H2S). In vitro, it converts two L-cysteine molecules into lanthionine and H2S, and two L-homocysteine molecules to homolanthionine and H2S, which can be particularly relevant under conditions of severe hyperhomocysteinemia. Lanthionine and homolanthionine are structural homologs of L,L-cystathionine that differ by the absence or presence of an extra methylene group, respectively. Acts as a cysteine-protein sulfhydrase by mediating sulfhydration of target proteins: sulfhydration consists of converting -SH groups into -SSH on specific cysteine residues of target proteins such as GAPDH, PTPN1 and NF-kappa-B subunit RELA, thereby regulating their function. By generating the gasotransmitter H2S, it participates in a number of physiological processes such as vasodilation, bone protection, and inflammation. Plays an essential role in myogenesis by contributing to the biogenesis of H2S in skeletal muscle tissue. Can also accept homoserine as substrate. Catalyzes the elimination of selenocystathionine (which can be derived from the diet) to yield selenocysteine, ammonia and 2-oxobutanoate. This Rattus norvegicus (Rat) protein is Cystathionine gamma-lyase (Cth).